Consider the following 635-residue polypeptide: Threonine--tRNA ligase (635 aa).

Positions 1–61 constitute a TGS domain; it reads MIAITLPDGS…DRDAELAIVT (61 aa). The segment at 242-533 is catalytic; sequence DHRKLGKTLD…LLENHAGALP (292 aa). Zn(2+) is bound by residues cysteine 333, histidine 384, and histidine 510.

It belongs to the class-II aminoacyl-tRNA synthetase family. In terms of assembly, homodimer. It depends on Zn(2+) as a cofactor.

The protein localises to the cytoplasm. The catalysed reaction is tRNA(Thr) + L-threonine + ATP = L-threonyl-tRNA(Thr) + AMP + diphosphate + H(+). Catalyzes the attachment of threonine to tRNA(Thr) in a two-step reaction: L-threonine is first activated by ATP to form Thr-AMP and then transferred to the acceptor end of tRNA(Thr). Also edits incorrectly charged L-seryl-tRNA(Thr). In Cupriavidus necator (strain ATCC 17699 / DSM 428 / KCTC 22496 / NCIMB 10442 / H16 / Stanier 337) (Ralstonia eutropha), this protein is Threonine--tRNA ligase.